We begin with the raw amino-acid sequence, 32 residues long: Defensin-3 (32 aa).

Disulfide bonds link Cys3/Cys31, Cys5/Cys20, and Cys10/Cys30.

It is found in the secreted. Has antibacterial activity against the Gram-negative bacterium E.coli and the Gram-positive bacteria L.monocytogenes and S.aureus. Has antifungal activity against C.albicans. The polypeptide is Defensin-3 (Papio hamadryas (Hamadryas baboon)).